A 132-amino-acid polypeptide reads, in one-letter code: Lectin OAA (132 aa).

A run of 2 repeats spans residues 1 to 66 and 67 to 132. The interval 1-132 is 2 X approximate tandem repeats; it reads ALYNVENQWG…GPIGFKGTTL (132 aa).

Monomer.

Lectin specific for high mannose N-glycans, recognizes the branched moiety of these glycans. Does not recognize other types of N-glycans or monosaccharides. Agglutinates trypsin-treated rabbit erythrocytes. Does not require divalent cations for activity. Inhibits HIV replication in MT4 cells with an EC(50) of 45 nM. Binds to the HIV envelope glycoprotein gp120. In Planktothrix agardhii (Oscillatoria agardhii), this protein is Lectin OAA.